Reading from the N-terminus, the 71-residue chain is Translation initiation factor IF-1 (71 aa).

Positions 1 to 71 constitute an S1-like domain; sequence MAKDAIKLRA…TKGRITYRHK (71 aa).

This sequence belongs to the IF-1 family. As to quaternary structure, component of the 30S ribosomal translation pre-initiation complex which assembles on the 30S ribosome in the order IF-2 and IF-3, IF-1 and N-formylmethionyl-tRNA(fMet); mRNA recruitment can occur at any time during PIC assembly.

It localises to the cytoplasm. In terms of biological role, one of the essential components for the initiation of protein synthesis. Stabilizes the binding of IF-2 and IF-3 on the 30S subunit to which N-formylmethionyl-tRNA(fMet) subsequently binds. Helps modulate mRNA selection, yielding the 30S pre-initiation complex (PIC). Upon addition of the 50S ribosomal subunit IF-1, IF-2 and IF-3 are released leaving the mature 70S translation initiation complex. The chain is Translation initiation factor IF-1 from Mycoplasmopsis synoviae (strain 53) (Mycoplasma synoviae).